A 458-amino-acid polypeptide reads, in one-letter code: Cysteine--tRNA ligase (458 aa).

Residue C27 participates in Zn(2+) binding. The 'HIGH' region signature appears at 29–39 (MTVYDYMHIGH). Residues C208, H233, and E237 each contribute to the Zn(2+) site. Residues 265-269 (KMSKS) carry the 'KMSKS' region motif. K268 is a binding site for ATP.

Belongs to the class-I aminoacyl-tRNA synthetase family. As to quaternary structure, monomer. Zn(2+) serves as cofactor.

The protein localises to the cytoplasm. It catalyses the reaction tRNA(Cys) + L-cysteine + ATP = L-cysteinyl-tRNA(Cys) + AMP + diphosphate. The chain is Cysteine--tRNA ligase from Coxiella burnetii (strain Dugway 5J108-111).